Reading from the N-terminus, the 644-residue chain is 3D-(3,5/4)-trihydroxycyclohexane-1,2-dione hydrolase (644 aa).

Glu-65 provides a ligand contact to thiamine diphosphate. Residues Ser-442–Gly-522 are thiamine pyrophosphate binding. Asp-493 and Asn-520 together coordinate Mg(2+).

It belongs to the TPP enzyme family. Requires Mg(2+) as cofactor. The cofactor is thiamine diphosphate.

The enzyme catalyses 3D-3,5/4-trihydroxycyclohexane-1,2-dione + H2O = 5-deoxy-D-glucuronate + H(+). It functions in the pathway polyol metabolism; myo-inositol degradation into acetyl-CoA; acetyl-CoA from myo-inositol: step 3/7. Its function is as follows. Involved in the cleavage of the C1-C2 bond of 3D-(3,5/4)-trihydroxycyclohexane-1,2-dione (THcHDO) to yield 5-deoxy-glucuronate (5DG). The chain is 3D-(3,5/4)-trihydroxycyclohexane-1,2-dione hydrolase from Bacillus anthracis (strain A0248).